Consider the following 116-residue polypeptide: MWLQDRIATFFFPKGMMLTTAALMLFFLHLGIFIRDVHNFCITYHYDHMSFHYTVVLMFSQVISICWAAMGSLYAEMTENKYVCFSALTILMLNGAMFFNRLSLEFLAIEYREEHH.

Residues 1 to 16 lie on the Cytoplasmic side of the membrane; it reads MWLQDRIATFFFPKGM. Residues 17-38 form a helical membrane-spanning segment; it reads MLTTAALMLFFLHLGIFIRDVH. Topologically, residues 39–51 are extracellular; it reads NFCITYHYDHMSF. A helical membrane pass occupies residues 52 to 72; the sequence is HYTVVLMFSQVISICWAAMGS. The Cytoplasmic segment spans residues 73-84; the sequence is LYAEMTENKYVC. A helical membrane pass occupies residues 85–107; it reads FSALTILMLNGAMFFNRLSLEFL. Residues 108–116 are Extracellular-facing; that stretch reads AIEYREEHH.

In terms of assembly, component of the CatSper complex or CatSpermasome composed of the core pore-forming members CATSPER1, CATSPER2, CATSPER3 and CATSPER4 as well as auxiliary members CATSPERB, CATSPERG, CATSPERD, CATSPERE, CATSPERZ, C2CD6/CATSPERT, TMEM249, TMEM262 and EFCAB9. HSPA1 may be an additional auxiliary complex member. The core complex members CATSPER1, CATSPER2, CATSPER3 and CATSPER4 form a heterotetrameric channel. The auxiliary CATSPERB, CATSPERG, CATSPERD and CATSPERE subunits form a pavilion-like structure over the pore which stabilizes the complex through interactions with CATSPER4, CATSPER3, CATSPER1 and CATSPER2 respectively. TMEM262/CATSPERH interacts with CATSPERB, further stabilizing the complex. C2CD6/CATSPERT interacts at least with CATSPERD and is required for targeting the CatSper complex in the flagellar membrane.

The protein resides in the cell projection. Its subcellular location is the cilium. It is found in the flagellum membrane. Functionally, auxiliary component of the CatSper complex, a complex involved in sperm cell hyperactivation. The sequence is that of Cation channel sperm-associated auxiliary subunit TMEM262 from Homo sapiens (Human).